The chain runs to 139 residues: uncharacterized protein (139 aa).

The protein to E.coli YecT.

This is an uncharacterized protein from Rhizobium meliloti (strain 1021) (Ensifer meliloti).